Consider the following 132-residue polypeptide: Small ribosomal subunit protein uS8 (132 aa).

The protein belongs to the universal ribosomal protein uS8 family. Part of the 30S ribosomal subunit. Contacts proteins S5 and S12.

Its function is as follows. One of the primary rRNA binding proteins, it binds directly to 16S rRNA central domain where it helps coordinate assembly of the platform of the 30S subunit. This is Small ribosomal subunit protein uS8 from Nitrobacter winogradskyi (strain ATCC 25391 / DSM 10237 / CIP 104748 / NCIMB 11846 / Nb-255).